Consider the following 464-residue polypeptide: 3-isopropylmalate dehydratase large subunit (464 aa).

3 residues coordinate [4Fe-4S] cluster: Cys-345, Cys-405, and Cys-408.

The protein belongs to the aconitase/IPM isomerase family. LeuC type 1 subfamily. In terms of assembly, heterodimer of LeuC and LeuD. The cofactor is [4Fe-4S] cluster.

The enzyme catalyses (2R,3S)-3-isopropylmalate = (2S)-2-isopropylmalate. Its pathway is amino-acid biosynthesis; L-leucine biosynthesis; L-leucine from 3-methyl-2-oxobutanoate: step 2/4. Functionally, catalyzes the isomerization between 2-isopropylmalate and 3-isopropylmalate, via the formation of 2-isopropylmaleate. This Bacteroides thetaiotaomicron (strain ATCC 29148 / DSM 2079 / JCM 5827 / CCUG 10774 / NCTC 10582 / VPI-5482 / E50) protein is 3-isopropylmalate dehydratase large subunit.